Reading from the N-terminus, the 1046-residue chain is MNMNESISKDGQGEEEQNNFSFGGKPGSYDSNSDSAQRKKSFSTTKPTEYNLPKEQPESTSKNLETKAKNILLPWRKKHNKDSETPHEDTEADANRRANVTSDVNPVSADTKSSSGPNATITTHGYSYVKTTTPAATSEQSKVKTSPPTSHEHSNIKASPTAHRHSKGDAGHPSIATTHNHSTSKAATSPVTHTHGHSSATTSPVTHTHGHASVKTTSPTNTHEHSKANTGPSATATTHGHINVKTTHPVSHGHSGSSTGPKSTAAAQDHSSTKTNPSVTHGHTSVKDNSSATKGYSNTDSNSDRDVIPGSFRGMTGTDVNPVDPSVYTSTGPKSNVSSGMNAVDPSVYTDTSSKSADRRKYSGNTATGPPQDTIKEIAQNVKMDESEQTGLKNDQVSGSDAIQQQTMEPEPKAAVGTSGFVSQQPSYHDSNKNIQHPEKNKVDNKNISERAAEKFNIERDDILESADDYQQKNIKSKTDSNWGPIEYSSSAGKNKNLQDVVIPSSMKEKFDSGTSGSQNMPKAGTELGHMKYNDNGRDNLQYVAGSQAGSQNTNNNIDMSPRHEAEWSGLSNDATTRNNVVSPAMKDEDMNEDSTKPHQYGLDYLDDVEDYHENDIDDYSNAKKNDLYSKKAYQGKPSDYNYEQREKIPGTFEPDTLSKSVQKQDEDPLSPRQTTNRAGMETARDESLGNYEYSNTSGNKKLSDLSKNKSGPTPTRSNFIDQIEPRRAKTTQDIASDAKDFTNNPETGTTGNVDTTGRMGAKSKTFSSNPFDDSKNTDTHLENANVAAFDNSRSGDTTYSKSGDAETAAYDNIKNADPTYAKSQDITGMTHDQEPSSEQKASYGSGGNSQNQEYSSDDNIDVNKNAKVLEEDAPGYKREVDLKNKRRTDLGGADASNAYAAEVGNFPSLIDPHVPTYGFKDTNTSSSQKPSEGTYPETTSYSIHNETTSQGRKVSVGSMGSGKSKHHHNHHRHSRQNSSKGSDYDYNNSTHSAEHTPRHHQYGSDEGEQDYHDDEQGEEQAGKQSFMGRVRKSISGGTFGFRSEI.

Disordered stretches follow at residues 1–455, 469–894, and 908–1046; these read MNMN…AAEK, DYQQ…LGGA, and PSLI…RSEI. Ser41 bears the Phosphoserine mark. Positions 81–96 are enriched in basic and acidic residues; it reads KDSETPHEDTEADANR. 3 stretches are compositionally biased toward polar residues: residues 98-149, 175-191, and 228-301; these read ANVT…SPPT, IATT…TSPV, and ANTG…NTDS. Ser303 carries the post-translational modification Phosphoserine. Positions 327-341 are enriched in polar residues; the sequence is VYTSTGPKSNVSSGM. Phosphoserine is present on Ser363. Composition is skewed to polar residues over residues 389-408 and 420-429; these read QTGL…QQTM and GFVSQQPSYH. Basic and acidic residues predominate over residues 430 to 455; that stretch reads DSNKNIQHPEKNKVDNKNISERAAEK. Residues 488 to 498 show a composition bias toward polar residues; the sequence is YSSSAGKNKNL. Ser491 bears the Phosphoserine mark. The span at 529–538 shows a compositional bias: basic and acidic residues; sequence GHMKYNDNGR. Residues 548–559 show a composition bias toward polar residues; the sequence is QAGSQNTNNNID. Ser561 is subject to Phosphoserine. The segment covering 570–582 has biased composition (polar residues); it reads GLSNDATTRNNVV. Basic and acidic residues predominate over residues 586 to 597; sequence MKDEDMNEDSTK. Acidic residues predominate over residues 605 to 619; that stretch reads YLDDVEDYHENDIDD. The segment covering 621-630 has biased composition (basic and acidic residues); sequence SNAKKNDLYS. Ser671 bears the Phosphoserine mark. Residues 742–756 are compositionally biased toward polar residues; sequence FTNNPETGTTGNVDT. The span at 773–782 shows a compositional bias: basic and acidic residues; that stretch reads DDSKNTDTHL. Polar residues-rich tracts occupy residues 792-802 and 837-855; these read NSRSGDTTYSK and SSEQ…NQEY. Tyr855 is modified (phosphotyrosine). Phosphoserine is present on Ser857. A compositionally biased stretch (basic and acidic residues) spans 868–890; it reads KVLEEDAPGYKREVDLKNKRRTD. Polar residues predominate over residues 922-951; the sequence is DTNTSSSQKPSEGTYPETTSYSIHNETTSQ. A compositionally biased stretch (low complexity) spans 952–963; that stretch reads GRKVSVGSMGSG. Positions 964-976 are enriched in basic residues; sequence KSKHHHNHHRHSR. Ser1005 bears the Phosphoserine mark. Residues 1006 to 1019 show a composition bias toward acidic residues; the sequence is DEGEQDYHDDEQGE. Ser1034 is modified (phosphoserine).

In terms of assembly, conjugated with HUB1. HUB1 has not the classical C-terminal Gly residue, so it is still unknown how conjugation may occur.

It localises to the cytoplasm. Its function is as follows. Polarity-determining protein which forms a conjugate with the ubiquitin-like modifier HUB1. Involved in bud site selection and cellular morphogenesis during conjugation. Required for survival during stationary phase. This is Protein HBT1 (HBT1) from Saccharomyces cerevisiae (strain ATCC 204508 / S288c) (Baker's yeast).